The following is a 562-amino-acid chain: TBC1 domain family member 24 (562 aa).

Residues Lys-36, Arg-40, Lys-238, Arg-242, and 293–297 each bind a 1,2-diacyl-sn-glycero-3-phospho-(1D-myo-inositol); that span reads RLFSR. The Rab-GAP TBC domain occupies 42–259; it reads GHWAKSHTLR…FFHKVRGGQP (218 aa). In terms of domain architecture, TLDc spans 337–549; that stretch reads EIVSVKEMRD…ISIIEVWGFK (213 aa). Residues 450–471 are disordered; it reads NSSSADKEANSSQSDKDGIDPS. The span at 454–468 shows a compositional bias: basic and acidic residues; the sequence is ADKEANSSQSDKDGI.

As to quaternary structure, interacts with ARF6.

Its subcellular location is the cell membrane. It is found in the cytoplasm. It localises to the cytoplasmic vesicle membrane. The protein localises to the presynapse. In terms of biological role, may act as a GTPase-activating protein for Rab family protein(s). Involved in neuronal projections development, probably through a negative modulation of ARF6 function. Involved in the regulation of synaptic vesicle trafficking. The sequence is that of TBC1 domain family member 24 (tbc1d24) from Xenopus laevis (African clawed frog).